The chain runs to 185 residues: Ribosome-recycling factor (185 aa).

The residue at position 162 (K162) is an N6-acetyllysine.

The protein belongs to the RRF family.

Its subcellular location is the cytoplasm. Responsible for the release of ribosomes from messenger RNA at the termination of protein biosynthesis. May increase the efficiency of translation by recycling ribosomes from one round of translation to another. The chain is Ribosome-recycling factor from Shigella boydii serotype 18 (strain CDC 3083-94 / BS512).